The following is a 276-amino-acid chain: NH(3)-dependent NAD(+) synthetase (276 aa).

An ATP-binding site is contributed by 46–53; it reads GISGGQDS. Mg(2+) is bound at residue Asp-52. Arg-140 is a deamido-NAD(+) binding site. Thr-160 is a binding site for ATP. Glu-165 is a binding site for Mg(2+). Deamido-NAD(+)-binding residues include Lys-173 and Asp-180. Residues Lys-189 and Thr-211 each contribute to the ATP site. 260–261 serves as a coordination point for deamido-NAD(+); the sequence is HK.

It belongs to the NAD synthetase family. In terms of assembly, homodimer.

The catalysed reaction is deamido-NAD(+) + NH4(+) + ATP = AMP + diphosphate + NAD(+) + H(+). The protein operates within cofactor biosynthesis; NAD(+) biosynthesis; NAD(+) from deamido-NAD(+) (ammonia route): step 1/1. Its function is as follows. Catalyzes the ATP-dependent amidation of deamido-NAD to form NAD. Uses ammonia as a nitrogen source. The polypeptide is NH(3)-dependent NAD(+) synthetase (Citrobacter koseri (strain ATCC BAA-895 / CDC 4225-83 / SGSC4696)).